A 368-amino-acid chain; its full sequence is 7,8-didemethyl-8-hydroxy-5-deazariboflavin synthase (368 aa).

Residues 36 to 272 enclose the Radical SAM core domain; sequence LSYCRNVFLP…EEVSVQVPPN (237 aa). [4Fe-4S] cluster-binding residues include cysteine 50, cysteine 54, and cysteine 57.

The protein belongs to the radical SAM superfamily. CofG family. In terms of assembly, consists of two subunits, CofG and CofH. The cofactor is [4Fe-4S] cluster.

It catalyses the reaction 5-amino-5-(4-hydroxybenzyl)-6-(D-ribitylimino)-5,6-dihydrouracil + S-adenosyl-L-methionine = 7,8-didemethyl-8-hydroxy-5-deazariboflavin + 5'-deoxyadenosine + L-methionine + NH4(+) + H(+). Its pathway is cofactor biosynthesis; coenzyme F0 biosynthesis. In terms of biological role, catalyzes the radical-mediated synthesis of 7,8-didemethyl-8-hydroxy-5-deazariboflavin from 5-amino-5-(4-hydroxybenzyl)-6-(D-ribitylimino)-5,6-dihydrouracil. The chain is 7,8-didemethyl-8-hydroxy-5-deazariboflavin synthase from Haloarcula marismortui (strain ATCC 43049 / DSM 3752 / JCM 8966 / VKM B-1809) (Halobacterium marismortui).